The chain runs to 1171 residues: DNA-directed RNA polymerase subunit beta (1171 aa).

This sequence belongs to the RNA polymerase beta chain family. In terms of assembly, the RNAP catalytic core consists of 2 alpha, 1 beta, 1 beta' and 1 omega subunit. When a sigma factor is associated with the core the holoenzyme is formed, which can initiate transcription.

It catalyses the reaction RNA(n) + a ribonucleoside 5'-triphosphate = RNA(n+1) + diphosphate. Functionally, DNA-dependent RNA polymerase catalyzes the transcription of DNA into RNA using the four ribonucleoside triphosphates as substrates. The polypeptide is DNA-directed RNA polymerase subunit beta (Kineococcus radiotolerans (strain ATCC BAA-149 / DSM 14245 / SRS30216)).